A 678-amino-acid chain; its full sequence is MPDPSTYRPAPGSIPVEPGVYRFRDPHGRVIYVGKAKSLRSRLNSYFADLSGLAPRTRQMVMTAASVEWTVVSTEVEALQLEYNWIKEFDPRFNIRYRDDKSYPVLAVTLNEEYPRLKVYRGPRRKGVRYFGPYSHAWAIRETLDLLTRVFPARTCSNGVFKRHSQIDRPCLLGYIDKCAAPCVGRVSAEEHRRIVLDFCDFLAGKTDRLIREMEQQMNAAAEELDFERAARLRDNIGAMRRAMEKQTVVLGDGTDADVVAFADDELEAAVQVFHVRGGRVRGQRGWVIEKSGEPGESTPAYLVEQFLTQFYGDQAELGGAADEATNPVPRQVLVPVLPDTTEELETWLSQLRGSRVSLRVPQRGDKRALAETVKRNAEQALTQHKLKRAGDFTARSAALQSIQEALGLADAPLRIECVDISHVQGTDVVASLVVFEDGLPRKSDYRHFAIREAAGDGRSDDVASIAEVTRRRFHRHLRDAEAAPEGRPEQGPRASARPEQGPRASARPARFAYPPNLFVVDGGAPQVNAAAAVLDELGISDVAVIGLAKRLEEVWVPNLDGTAPDPVIFPRNSDGLYLLQRVRDEAHRFAISYHRSKRSKRMTASALDSVRGLGEHRRKALVTHFGSLARLKQASVDEITAVPGIGAATARAVLEALGADSGAAPTDIGNDQSRISG.

The region spanning 16 to 95 (VEPGVYRFRD…IKEFDPRFNI (80 aa)) is the GIY-YIG domain. The 36-residue stretch at 208-243 (DRLIREMEQQMNAAAEELDFERAARLRDNIGAMRRA) folds into the UVR domain. The segment at 477–508 (HLRDAEAAPEGRPEQGPRASARPEQGPRASAR) is disordered. A compositionally biased stretch (basic and acidic residues) spans 479-491 (RDAEAAPEGRPEQ).

Belongs to the UvrC family. Interacts with UvrB in an incision complex.

The protein localises to the cytoplasm. In terms of biological role, the UvrABC repair system catalyzes the recognition and processing of DNA lesions. UvrC both incises the 5' and 3' sides of the lesion. The N-terminal half is responsible for the 3' incision and the C-terminal half is responsible for the 5' incision. The protein is UvrABC system protein C of Mycolicibacterium vanbaalenii (strain DSM 7251 / JCM 13017 / BCRC 16820 / KCTC 9966 / NRRL B-24157 / PYR-1) (Mycobacterium vanbaalenii).